The sequence spans 584 residues: Alpha-glucosidase MAL12 (584 aa).

D214 serves as the catalytic Nucleophile. Catalysis depends on E276, which acts as the Proton donor.

It belongs to the glycosyl hydrolase 13 family.

The enzyme catalyses Hydrolysis of terminal, non-reducing (1-&gt;4)-linked alpha-D-glucose residues with release of alpha-D-glucose.. The polypeptide is Alpha-glucosidase MAL12 (MAL12) (Saccharomyces cerevisiae (strain ATCC 204508 / S288c) (Baker's yeast)).